We begin with the raw amino-acid sequence, 775 residues long: Armadillo-like helical domain-containing protein 4 (775 aa).

An N-terminal signal peptide occupies residues 1–47 (MLQDSITGIVNSFNLFFPSTMSRPTLMPTCVAFCSILFLTLATGCQA). Topologically, residues 48-715 (FPKVERRETA…KDKAGYMSGM (668 aa)) are extracellular. An N-linked (GlcNAc...) asparagine glycan is attached at Asn-76. Disordered stretches follow at residues 120 to 148 (AGLL…PGPS), 247 to 273 (VPGV…DGQS), and 324 to 366 (KFES…PSST). The span at 129 to 142 (GVYSSSEPVVSASE) shows a compositional bias: polar residues. The segment covering 324 to 335 (KFESISRGRPPE) has biased composition (basic and acidic residues). Asn-476 carries an N-linked (GlcNAc...) asparagine glycan. A disordered region spans residues 559–669 (IPVLGSPMAP…PGITSQEPDI (111 aa)). Positions 577 to 599 (TISSALPSEGRTSPSISRPNTAA) are enriched in polar residues. The segment covering 606–640 (LESEEVEDDEDEEDEEDEEEEEEDEEDEEDEEDKE) has biased composition (acidic residues). The helical transmembrane segment at 716–736 (LVPVGVGIAGALFILGALYSI) threads the bilayer. Residues 737–775 (KVMNRRRRNGFKRHKRKQREFNSMQDRVMLLADSSEDEF) lie on the Cytoplasmic side of the membrane. 2 positions are modified to phosphoserine: Ser-770 and Ser-771.

Interacts with IL6ST; this interaction prevents IL6ST protein homodimerization and bridges ARMH4 with IL6R and STAT3 and therefore inhibits phosphorylation of STAT3 at 'Tyr-705'. Interacts (via cytoplasmic tail) with RICTOR; this interaction bridges ARMH4 to the mTORC2 complex and inhibits the mTORC2 kinase activity. Expressed in bone-marroew cells.

Its subcellular location is the membrane. May modulate immune response and may play a role in inflammation. Down-modulates STAT3 signaling throught direct interaction with IL6ST, resulting in the inhibition of phosphorylation of STAT3 at 'Tyr-705'. May negatively regulates AKT signaling by modulating the activity of mTORC2 complex through RICTOR interaction. This chain is Armadillo-like helical domain-containing protein 4, found in Mus musculus (Mouse).